We begin with the raw amino-acid sequence, 112 residues long: UPF0342 protein SGO_1370 (112 aa).

The protein belongs to the UPF0342 family.

This is UPF0342 protein SGO_1370 from Streptococcus gordonii (strain Challis / ATCC 35105 / BCRC 15272 / CH1 / DL1 / V288).